The primary structure comprises 349 residues: MSLRLTSSLNQNKTTNVNGAISRCLWRTETRCSTGYGSKSGFAEEVGRKKLEIGRLELKWERKLDSLDLFVRRKFEKILFPNGNKSSRKKANLDKNRNIATKVANRFELSLNQPVHFSQTNPKSTPEPPCTSSSGAGDCHENLPADGYPIENDDGMGEPARMLGKIKKPRSRLECIFCKDSHTRSIVNCPNIRKISDRTNILIVQGRKIDNTEKQRKAKKTDVRVGRKFDALRNFIERNIEEVARDEPISEQKVNHRSEFSEQIIFGDYERGPTFLTGNLVSSGLSTFTMDSEVSNDSFGIPGTMPSPKYLVSPISNPTFSNKKTRLIRQCHQLHSRNCAYFVEMSIFQ.

Over residues 116–135 the composition is skewed to polar residues; the sequence is HFSQTNPKSTPEPPCTSSSG. The tract at residues 116-148 is disordered; that stretch reads HFSQTNPKSTPEPPCTSSSGAGDCHENLPADGY.

This is an uncharacterized protein from Caenorhabditis elegans.